A 344-amino-acid chain; its full sequence is GTPase Obg (344 aa).

Positions 1 to 159 constitute an Obg domain; sequence MKFLDEAKVY…MWLILRLKLI (159 aa). Residues 160 to 327 enclose the OBG-type G domain; that stretch reads ADAGLVGLPN…ALRAIQAQLD (168 aa). GTP is bound by residues 166-173, 191-195, 212-215, 279-282, and 308-310; these read GLPNAGKS, FTTLH, DIPG, SKAD, and SAA. 2 residues coordinate Mg(2+): Ser173 and Thr193.

Belongs to the TRAFAC class OBG-HflX-like GTPase superfamily. OBG GTPase family. Monomer. It depends on Mg(2+) as a cofactor.

It is found in the cytoplasm. An essential GTPase which binds GTP, GDP and possibly (p)ppGpp with moderate affinity, with high nucleotide exchange rates and a fairly low GTP hydrolysis rate. Plays a role in control of the cell cycle, stress response, ribosome biogenesis and in those bacteria that undergo differentiation, in morphogenesis control. The chain is GTPase Obg from Methylorubrum populi (strain ATCC BAA-705 / NCIMB 13946 / BJ001) (Methylobacterium populi).